Reading from the N-terminus, the 90-residue chain is Barrier-to-autointegration factor-like protein (90 aa).

In terms of assembly, homodimer. Heterodimerizes with BANF1.

The protein resides in the nucleus. It is found in the cytoplasm. In terms of biological role, may play a role in BANF1 regulation and influence tissue-specific roles of BANF1. The sequence is that of Barrier-to-autointegration factor-like protein (Banf2) from Mus musculus (Mouse).